The primary structure comprises 276 residues: MRALETIATLREYRKSLKESVGFVPTMGALHRGHQSLIERSLKENSHTIVSVFVNPTQFGANEDFSAYPRPLEKDLALCEKSGVNAVFAPKIGEMYPYEAKQRLKLYAPAFLSHSLEGAVRKGHFDGVVQVVLRLFHLTNPTRAYFGKKDAQQLLIIQHLVQDLLLDIEIAPCEIVRDSDNLALSSRNVCLNATERKQALAIPKALEKIQQAIDRGEKACEKLKKLGLEILKNLEVDYLECCNHKLEPLKTIEPANTLVLVAARVGKTRLLDNLWV.

Met27–His34 contacts ATP. His34 serves as the catalytic Proton donor. Gln58 contributes to the (R)-pantoate binding site. A beta-alanine-binding site is contributed by Gln58. ATP is bound at residue Gly147–Asp150. Gln153 is a binding site for (R)-pantoate. Residues Val176 and Leu184–Arg187 contribute to the ATP site.

It belongs to the pantothenate synthetase family. Homodimer.

It localises to the cytoplasm. The catalysed reaction is (R)-pantoate + beta-alanine + ATP = (R)-pantothenate + AMP + diphosphate + H(+). Its pathway is cofactor biosynthesis; (R)-pantothenate biosynthesis; (R)-pantothenate from (R)-pantoate and beta-alanine: step 1/1. In terms of biological role, catalyzes the condensation of pantoate with beta-alanine in an ATP-dependent reaction via a pantoyl-adenylate intermediate. The chain is Pantothenate synthetase from Helicobacter pylori (strain J99 / ATCC 700824) (Campylobacter pylori J99).